The primary structure comprises 364 residues: DNA replication and repair protein RecF (364 aa).

30–37 contacts ATP; sequence GANGSGKT.

It belongs to the RecF family.

It localises to the cytoplasm. The RecF protein is involved in DNA metabolism; it is required for DNA replication and normal SOS inducibility. RecF binds preferentially to single-stranded, linear DNA. It also seems to bind ATP. This Sodalis glossinidius (strain morsitans) protein is DNA replication and repair protein RecF.